The following is a 100-amino-acid chain: Eukaryotic translation initiation factor 4E-binding protein 3 (100 aa).

Residues 40–46 (YDRKFLL) carry the YXXXXLphi motif motif. A disordered region spans residues 81 to 100 (LKEQETEEEIPDDAQFEMDI). Acidic residues predominate over residues 85–100 (ETEEEIPDDAQFEMDI). The short motif at 96-100 (FEMDI) is the TOS motif element.

This sequence belongs to the eIF4E-binding protein family. As to quaternary structure, interacts with EIF4E. Interacts with RPA2 (in unphosphorylated form via N-terminus); the interaction enhances EIF4EBP3-mediated inhibition of EIF4E-mediated mRNA nuclear export. Post-translationally, phosphorylated. In terms of tissue distribution, expression is highest in skeletal muscle, heart, kidney, and pancreas, whereas there is very little expression in brain and thymus.

The protein resides in the cytoplasm. It localises to the nucleus. In terms of biological role, repressor of translation initiation that regulates EIF4E activity by preventing its assembly into the eIF4F complex: the hypophosphorylated form competes with EIF4G1/EIF4G3 and strongly binds to EIF4E, leading to repression of translation. In contrast, the hyperphosphorylated form dissociates from EIF4E, allowing interaction between EIF4G1/EIF4G3 and EIF4E, leading to initiation of translation. Inhibits EIF4E-mediated mRNA nuclear export. The polypeptide is Eukaryotic translation initiation factor 4E-binding protein 3 (EIF4EBP3) (Homo sapiens (Human)).